A 395-amino-acid chain; its full sequence is Xylose isomerase (395 aa).

Residues histidine 54 and aspartate 57 contribute to the active site. Residues glutamate 181, glutamate 217, histidine 220, aspartate 245, aspartate 255, aspartate 257, and aspartate 293 each contribute to the Mg(2+) site.

It belongs to the xylose isomerase family. Homotetramer. It depends on Mg(2+) as a cofactor.

It is found in the cytoplasm. It carries out the reaction alpha-D-xylose = alpha-D-xylulofuranose. This is Xylose isomerase from Pseudarthrobacter chlorophenolicus (strain ATCC 700700 / DSM 12829 / CIP 107037 / JCM 12360 / KCTC 9906 / NCIMB 13794 / A6) (Arthrobacter chlorophenolicus).